A 154-amino-acid chain; its full sequence is Large ribosomal subunit protein uL13 (154 aa).

The protein belongs to the universal ribosomal protein uL13 family. As to quaternary structure, part of the 50S ribosomal subunit.

Its function is as follows. This protein is one of the early assembly proteins of the 50S ribosomal subunit, although it is not seen to bind rRNA by itself. It is important during the early stages of 50S assembly. This chain is Large ribosomal subunit protein uL13, found in Cereibacter sphaeroides (strain ATCC 17029 / ATH 2.4.9) (Rhodobacter sphaeroides).